A 379-amino-acid polypeptide reads, in one-letter code: MANLRIALVAGEASGDILGAGLMRALKAQHPAVQFIGVGGPLMQAEGLTSYFPMERLSVMGLVEVLGRLRELLARRKLLIQTLIEEKPDVFIGIDAPDFTLTLELKLRQAGIKTVHYVSPSVWAWRQKRVLKIREGCDLMLTLLPFEARFYEEKGVPVRFVGHTLADTIPLQADRTAARAELGLPDGPLVALMPGSRGGEVGRLASVFFDAAERLQALKPGVRFVLPCASPQRRVQIETLLEGRNLPLTLLDGQSHLALAACDAVLIASGTATLEALLYKRPMVVAYRLAPLTFWILKRMVKSPYISLPNLLAQRLLVPELLQDDATPEALAQTLLPLIDGGEEQTRGFDDIHRTLRRDASNQAADAVLSLIGQKQEAL.

This sequence belongs to the LpxB family.

It catalyses the reaction a lipid X + a UDP-2-N,3-O-bis[(3R)-3-hydroxyacyl]-alpha-D-glucosamine = a lipid A disaccharide + UDP + H(+). It participates in bacterial outer membrane biogenesis; LPS lipid A biosynthesis. In terms of biological role, condensation of UDP-2,3-diacylglucosamine and 2,3-diacylglucosamine-1-phosphate to form lipid A disaccharide, a precursor of lipid A, a phosphorylated glycolipid that anchors the lipopolysaccharide to the outer membrane of the cell. This is Lipid-A-disaccharide synthase from Pseudomonas fluorescens (strain SBW25).